We begin with the raw amino-acid sequence, 173 residues long: Ribulose bisphosphate carboxylase small subunit, chloroplastic 7 (173 aa).

A chloroplast-targeting transit peptide spans 1–49; sequence MASIPATVATVAQANMVAPFTGLKSNAAFPVTKKVNDFSTLASNGGRVQ.

Belongs to the RuBisCO small chain family. Heterohexadecamer of 8 large and 8 small subunits.

The protein localises to the plastid. It localises to the chloroplast. In terms of biological role, ruBisCO catalyzes two reactions: the carboxylation of D-ribulose 1,5-bisphosphate, the primary event in carbon dioxide fixation, as well as the oxidative fragmentation of the pentose substrate. Both reactions occur simultaneously and in competition at the same active site. Although the small subunit is not catalytic it is essential for maximal activity. This chain is Ribulose bisphosphate carboxylase small subunit, chloroplastic 7, found in Flaveria pringlei.